The primary structure comprises 76 residues: Bowman-Birk type proteinase inhibitor DE-3 (76 aa).

7 disulfides stabilise this stretch: C16–C70, C17–C32, C20–C66, C22–C30, C40–C47, C44–C59, and C49–C57.

The protein belongs to the Bowman-Birk serine protease inhibitor family.

The polypeptide is Bowman-Birk type proteinase inhibitor DE-3 (Macrotyloma axillare (Perennial horse gram)).